The primary structure comprises 490 residues: Tandem C2 domains nuclear protein (490 aa).

5 positions are modified to phosphoserine: serine 83, serine 156, serine 168, serine 174, and serine 211. Positions 189–215 (HDSLSSVPSSSSSRKNSQGSNRSLDTI) are disordered. Over residues 192–211 (LSSVPSSSSSRKNSQGSNRS) the composition is skewed to low complexity. A phosphothreonine mark is found at threonine 214 and threonine 216. Position 218 is a phosphoserine (serine 218). 2 C2 domains span residues 223–342 (DFGR…SLDI) and 344–471 (PPSK…NQWK). The Nuclear localization signal motif lies at 447–449 (RRK).

Its subcellular location is the nucleus. This chain is Tandem C2 domains nuclear protein (TC2N), found in Homo sapiens (Human).